We begin with the raw amino-acid sequence, 409 residues long: Elongation factor Tu, cyanelle (409 aa).

Residues 10–214 (KPHVNIGTIG…AVDEYIPTPE (205 aa)) form the tr-type G domain. The tract at residues 19–26 (GHVDHGKT) is G1. 19-26 (GHVDHGKT) contributes to the GTP binding site. Thr26 is a Mg(2+) binding site. Residues 60-64 (GITIN) are G2. The G3 stretch occupies residues 81 to 84 (DCPG). GTP-binding positions include 81–85 (DCPGH) and 136–139 (NKED). The G4 stretch occupies residues 136–139 (NKED). The interval 174 to 176 (SAL) is G5.

It belongs to the TRAFAC class translation factor GTPase superfamily. Classic translation factor GTPase family. EF-Tu/EF-1A subfamily.

It localises to the plastid. It is found in the cyanelle. The catalysed reaction is GTP + H2O = GDP + phosphate + H(+). Functionally, GTP hydrolase that promotes the GTP-dependent binding of aminoacyl-tRNA to the A-site of ribosomes during protein biosynthesis. The polypeptide is Elongation factor Tu, cyanelle (tufA) (Cyanophora paradoxa).